Reading from the N-terminus, the 377-residue chain is tRNA/tmRNA (uracil-C(5))-methyltransferase (377 aa).

S-adenosyl-L-methionine contacts are provided by glutamine 199, tyrosine 227, asparagine 232, glutamate 248, and aspartate 308. The Nucleophile role is filled by cysteine 333. Glutamate 367 acts as the Proton acceptor in catalysis.

Belongs to the class I-like SAM-binding methyltransferase superfamily. RNA M5U methyltransferase family. TrmA subfamily.

The catalysed reaction is uridine(54) in tRNA + S-adenosyl-L-methionine = 5-methyluridine(54) in tRNA + S-adenosyl-L-homocysteine + H(+). It catalyses the reaction uridine(341) in tmRNA + S-adenosyl-L-methionine = 5-methyluridine(341) in tmRNA + S-adenosyl-L-homocysteine + H(+). Its function is as follows. Dual-specificity methyltransferase that catalyzes the formation of 5-methyluridine at position 54 (m5U54) in all tRNAs, and that of position 341 (m5U341) in tmRNA (transfer-mRNA). This is tRNA/tmRNA (uracil-C(5))-methyltransferase from Aeromonas hydrophila subsp. hydrophila (strain ATCC 7966 / DSM 30187 / BCRC 13018 / CCUG 14551 / JCM 1027 / KCTC 2358 / NCIMB 9240 / NCTC 8049).